The chain runs to 85 residues: Depressant insect toxin BmK ITa1 (85 aa).

Residues 1–21 (MKLFLLLLISASMLIDGLVNA) form the signal peptide. The 61-residue stretch at 22-82 (DGYIRGSNGC…TWKSESNTCG (61 aa)) folds into the LCN-type CS-alpha/beta domain. 4 cysteine pairs are disulfide-bonded: Cys31–Cys81, Cys35–Cys56, Cys42–Cys63, and Cys46–Cys65. At Gly82 the chain carries Glycine amide.

Belongs to the long (4 C-C) scorpion toxin superfamily. Sodium channel inhibitor family. Beta subfamily. As to expression, expressed by the venom gland.

It is found in the secreted. In terms of biological role, depressant insect toxins cause a transient contraction paralysis followed by a slow flaccid paralysis. They bind voltage-independently to sodium channels (Nav) and block action potentials, primarily by depolarizing the axonal membrane and suppressing the sodium current. The protein is Depressant insect toxin BmK ITa1 of Olivierus martensii (Manchurian scorpion).